The following is a 486-amino-acid chain: Galactose-3-O-sulfotransferase 4 (486 aa).

At 1 to 18 (MGPLSPARTLRLWGPRSL) the chain is on the cytoplasmic side. A helical; Signal-anchor for type II membrane protein transmembrane segment spans residues 19–39 (GVALGVFMTIGFALQLLGGPF). Residues 40–486 (QRRLPGLQLR…PLKTSRPLSP (447 aa)) lie on the Lumenal side of the membrane. N374 carries an N-linked (GlcNAc...) asparagine glycan.

This sequence belongs to the galactose-3-O-sulfotransferase family. It depends on Mn(2+) as a cofactor. In terms of tissue distribution, expressed mainly in placenta, thymus, testis, ovary, spinal cord, trachea and adrenal gland and at low levels in brain, lung, spleen, prostate, small intestine, colon, stomach thyroid and lymph node.

The protein resides in the golgi apparatus. It localises to the golgi stack membrane. The protein operates within protein modification; carbohydrate sulfation. Catalyzes the transfer of sulfate to beta-1,3-linked galactose residues in O-linked glycoproteins. Good substrates include asialofetuin, Gal-beta-1,3-GalNAc and Gal-beta-1,3 (GlcNAc-beta-1,6)GalNAc. This is Galactose-3-O-sulfotransferase 4 (GAL3ST4) from Homo sapiens (Human).